Consider the following 181-residue polypeptide: Lysozyme A (181 aa).

The N-terminal stretch at 1–19 (MRIAFFLLVLAVIIGFAYG) is a signal peptide. Residues 139–181 (LTDSRPLGPFNVTESEMAQLFIDHEIAMAQCEAEKTCNGFDLE) constitute a propeptide that is removed on maturation.

Belongs to the dictyostelium lysozyme family. Contains six disulfide bonds.

It localises to the cytoplasmic vesicle lumen. The catalysed reaction is Hydrolysis of 1,4-beta-linkages between N-acetylmuramic acid and N-acetyl-D-glucosamine residues in a peptidoglycan.. Functionally, has antibacterial activity against the Gram-positive bacteria B.subtilis, B.megaterium and M.luteus. No antibacterial activity detected against the Gram-positive bacterium S.aureus or against the Gram-negative bacterium E.coli. Lacks chitinase activity. This Dictyostelium discoideum (Social amoeba) protein is Lysozyme A.